Reading from the N-terminus, the 980-residue chain is Protein translocase subunit SecA (980 aa).

Residues Gln109, 127-131 (GEGKT), and Asp529 contribute to the ATP site. Positions 954 to 980 (QKIGRNDPCPCGSGKKYKHCHGKDNPQ) are disordered. Zn(2+)-binding residues include Cys962, Cys964, Cys973, and His974.

This sequence belongs to the SecA family. In terms of assembly, monomer and homodimer. Part of the essential Sec protein translocation apparatus which comprises SecA, SecYEG and auxiliary proteins SecDF. Other proteins may also be involved. Zn(2+) serves as cofactor.

It is found in the cell inner membrane. Its subcellular location is the cytoplasm. It carries out the reaction ATP + H2O + cellular proteinSide 1 = ADP + phosphate + cellular proteinSide 2.. Its function is as follows. Part of the Sec protein translocase complex. Interacts with the SecYEG preprotein conducting channel. Has a central role in coupling the hydrolysis of ATP to the transfer of proteins into and across the cell membrane, serving as an ATP-driven molecular motor driving the stepwise translocation of polypeptide chains across the membrane. This Brachyspira hyodysenteriae (strain ATCC 49526 / WA1) protein is Protein translocase subunit SecA.